The chain runs to 594 residues: Proline--tRNA ligase (594 aa).

Belongs to the class-II aminoacyl-tRNA synthetase family. ProS type 1 subfamily. As to quaternary structure, homodimer.

Its subcellular location is the cytoplasm. It carries out the reaction tRNA(Pro) + L-proline + ATP = L-prolyl-tRNA(Pro) + AMP + diphosphate. Its function is as follows. Catalyzes the attachment of proline to tRNA(Pro) in a two-step reaction: proline is first activated by ATP to form Pro-AMP and then transferred to the acceptor end of tRNA(Pro). As ProRS can inadvertently accommodate and process non-cognate amino acids such as alanine and cysteine, to avoid such errors it has two additional distinct editing activities against alanine. One activity is designated as 'pretransfer' editing and involves the tRNA(Pro)-independent hydrolysis of activated Ala-AMP. The other activity is designated 'posttransfer' editing and involves deacylation of mischarged Ala-tRNA(Pro). The misacylated Cys-tRNA(Pro) is not edited by ProRS. The protein is Proline--tRNA ligase of Synechococcus sp. (strain WH7803).